A 162-amino-acid polypeptide reads, in one-letter code: UPF0305 protein MmarC7_1691 (162 aa).

The protein belongs to the UPF0305 family.

The sequence is that of UPF0305 protein MmarC7_1691 from Methanococcus maripaludis (strain C7 / ATCC BAA-1331).